The chain runs to 227 residues: Phosphatidylserine decarboxylase proenzyme (227 aa).

The Schiff-base intermediate with substrate; via pyruvic acid role is filled by serine 184. Position 184 is a pyruvic acid (Ser); by autocatalysis (serine 184).

This sequence belongs to the phosphatidylserine decarboxylase family. PSD-A subfamily. As to quaternary structure, heterodimer of a large membrane-associated beta subunit and a small pyruvoyl-containing alpha subunit. Pyruvate is required as a cofactor. Is synthesized initially as an inactive proenzyme. Formation of the active enzyme involves a self-maturation process in which the active site pyruvoyl group is generated from an internal serine residue via an autocatalytic post-translational modification. Two non-identical subunits are generated from the proenzyme in this reaction, and the pyruvate is formed at the N-terminus of the alpha chain, which is derived from the carboxyl end of the proenzyme. The post-translation cleavage follows an unusual pathway, termed non-hydrolytic serinolysis, in which the side chain hydroxyl group of the serine supplies its oxygen atom to form the C-terminus of the beta chain, while the remainder of the serine residue undergoes an oxidative deamination to produce ammonia and the pyruvoyl prosthetic group on the alpha chain.

The protein resides in the cell membrane. It catalyses the reaction a 1,2-diacyl-sn-glycero-3-phospho-L-serine + H(+) = a 1,2-diacyl-sn-glycero-3-phosphoethanolamine + CO2. The protein operates within phospholipid metabolism; phosphatidylethanolamine biosynthesis; phosphatidylethanolamine from CDP-diacylglycerol: step 2/2. Its function is as follows. Catalyzes the formation of phosphatidylethanolamine (PtdEtn) from phosphatidylserine (PtdSer). The polypeptide is Phosphatidylserine decarboxylase proenzyme (Ehrlichia ruminantium (strain Welgevonden)).